Reading from the N-terminus, the 472-residue chain is ATP-dependent rRNA helicase rrp3 (472 aa).

The segment at 1–52 (MRDVKKRKIAHEAPEHGSDTESTSSHKSVAQQDDPLETQDEATATESRPAPK) is disordered. The segment covering 10–19 (AHEAPEHGSD) has biased composition (basic and acidic residues). A compositionally biased stretch (polar residues) spans 20 to 31 (TESTSSHKSVAQ). The Q motif motif lies at 52 to 80 (KSFKDLGIIDQLCEACETMGYKAPTPIQA). The 172-residue stretch at 83–254 (IPLALQGRDL…RASLSNPLRV (172 aa)) folds into the Helicase ATP-binding domain. 96 to 103 (AETGSGKT) is an ATP binding site. The DEAD box signature appears at 202–205 (DEAD). One can recognise a Helicase C-terminal domain in the interval 282–426 (YLVYLLNEFV…EYELEKDEVM (145 aa)). The tract at residues 444–472 (KNFDEKRGTKAKKFGKGKRSRDEMDQEEG) is disordered. Residues 452–462 (TKAKKFGKGKR) show a composition bias toward basic residues.

This sequence belongs to the DEAD box helicase family. DDX47/RRP3 subfamily. As to quaternary structure, interacts with the SSU processome.

The protein resides in the nucleus. The enzyme catalyses ATP + H2O = ADP + phosphate + H(+). Functionally, ATP-dependent rRNA helicase required for pre-ribosomal RNA processing. Involved in the maturation of the 35S-pre-rRNA and to its cleavage to mature 18S rRNA. This Aspergillus fumigatus (strain ATCC MYA-4609 / CBS 101355 / FGSC A1100 / Af293) (Neosartorya fumigata) protein is ATP-dependent rRNA helicase rrp3.